The sequence spans 301 residues: Acetyl-coenzyme A carboxylase carboxyl transferase subunit beta (301 aa).

The CoA carboxyltransferase N-terminal domain occupies 25–294 (LWIKDPSTGE…NSDAPAPQKP (270 aa)).

The protein belongs to the AccD/PCCB family. As to quaternary structure, acetyl-CoA carboxylase is a heterohexamer composed of biotin carboxyl carrier protein (AccB), biotin carboxylase (AccC) and two subunits each of ACCase subunit alpha (AccA) and ACCase subunit beta (AccD).

It localises to the cytoplasm. It carries out the reaction N(6)-carboxybiotinyl-L-lysyl-[protein] + acetyl-CoA = N(6)-biotinyl-L-lysyl-[protein] + malonyl-CoA. The protein operates within lipid metabolism; malonyl-CoA biosynthesis; malonyl-CoA from acetyl-CoA: step 1/1. Component of the acetyl coenzyme A carboxylase (ACC) complex. Biotin carboxylase (BC) catalyzes the carboxylation of biotin on its carrier protein (BCCP) and then the CO(2) group is transferred by the transcarboxylase to acetyl-CoA to form malonyl-CoA. The polypeptide is Acetyl-coenzyme A carboxylase carboxyl transferase subunit beta (Brucella canis (strain ATCC 23365 / NCTC 10854 / RM-666)).